The following is a 731-amino-acid chain: 1,4-alpha-glucan branching enzyme GlgB 2 (731 aa).

D410 (nucleophile) is an active-site residue. E463 functions as the Proton donor in the catalytic mechanism.

It belongs to the glycosyl hydrolase 13 family. GlgB subfamily. Monomer.

The enzyme catalyses Transfers a segment of a (1-&gt;4)-alpha-D-glucan chain to a primary hydroxy group in a similar glucan chain.. Its pathway is glycan biosynthesis; glycogen biosynthesis. Catalyzes the formation of the alpha-1,6-glucosidic linkages in glycogen by scission of a 1,4-alpha-linked oligosaccharide from growing alpha-1,4-glucan chains and the subsequent attachment of the oligosaccharide to the alpha-1,6 position. The sequence is that of 1,4-alpha-glucan branching enzyme GlgB 2 from Xanthomonas oryzae pv. oryzae (strain MAFF 311018).